A 459-amino-acid polypeptide reads, in one-letter code: Cysteine--tRNA ligase (459 aa).

Zn(2+) is bound at residue cysteine 29. Residues 31–41 (MTVYDLCHLGH) carry the 'HIGH' region motif. Zn(2+)-binding residues include cysteine 213, histidine 238, and glutamate 242. The short motif at 270–274 (KMSKS) is the 'KMSKS' region element. Position 273 (lysine 273) interacts with ATP.

Belongs to the class-I aminoacyl-tRNA synthetase family. In terms of assembly, monomer. Zn(2+) is required as a cofactor.

Its subcellular location is the cytoplasm. It catalyses the reaction tRNA(Cys) + L-cysteine + ATP = L-cysteinyl-tRNA(Cys) + AMP + diphosphate. The sequence is that of Cysteine--tRNA ligase from Variovorax paradoxus (strain S110).